The primary structure comprises 367 residues: Dual specificity protein phosphatase 1 (367 aa).

In terms of domain architecture, Rhodanese spans G20–S137. The Tyrosine-protein phosphatase domain occupies G173–A314. Residue C258 is the Phosphocysteine intermediate of the active site. Phosphoserine; by MAPK1 and MAPK3 is present on residues S359 and S364.

This sequence belongs to the protein-tyrosine phosphatase family. Non-receptor class dual specificity subfamily. Post-translationally, phosphorylation at Ser-359 and Ser-364 by MAPK1/ERK2 and MAPK3/ERK1 reduces its rate of degradation. 'Lys-48'-linked polyubiquitinated by NEURL3, leading to proteasomal degradation.

Its subcellular location is the nucleus. It carries out the reaction O-phospho-L-tyrosyl-[protein] + H2O = L-tyrosyl-[protein] + phosphate. The catalysed reaction is O-phospho-L-seryl-[protein] + H2O = L-seryl-[protein] + phosphate. The enzyme catalyses O-phospho-L-threonyl-[protein] + H2O = L-threonyl-[protein] + phosphate. In terms of biological role, dual specificity phosphatase that dephosphorylates MAP kinase MAPK1/ERK2 on both 'Thr-183' and 'Tyr-185', regulating its activity during the meiotic cell cycle. The chain is Dual specificity protein phosphatase 1 from Mus musculus (Mouse).